A 360-amino-acid chain; its full sequence is Phospho-N-acetylmuramoyl-pentapeptide-transferase (360 aa).

The next 10 membrane-spanning stretches (helical) occupy residues 26 to 46 (AIMS…RLIA), 70 to 90 (GTPT…ALLW), 94 to 114 (SNPY…VGFV), 132 to 152 (WKYF…YMHG), 168 to 188 (VMPQ…VGTS), 199 to 219 (GLAI…AWAT), 239 to 259 (LVVL…FNTY), 263 to 283 (VFMG…IAVL), 288 to 308 (LLLV…ILQV), and 338 to 358 (VIVR…ATLK).

This sequence belongs to the glycosyltransferase 4 family. MraY subfamily. Requires Mg(2+) as cofactor.

The protein resides in the cell inner membrane. It catalyses the reaction UDP-N-acetyl-alpha-D-muramoyl-L-alanyl-gamma-D-glutamyl-meso-2,6-diaminopimeloyl-D-alanyl-D-alanine + di-trans,octa-cis-undecaprenyl phosphate = di-trans,octa-cis-undecaprenyl diphospho-N-acetyl-alpha-D-muramoyl-L-alanyl-D-glutamyl-meso-2,6-diaminopimeloyl-D-alanyl-D-alanine + UMP. It functions in the pathway cell wall biogenesis; peptidoglycan biosynthesis. In terms of biological role, catalyzes the initial step of the lipid cycle reactions in the biosynthesis of the cell wall peptidoglycan: transfers peptidoglycan precursor phospho-MurNAc-pentapeptide from UDP-MurNAc-pentapeptide onto the lipid carrier undecaprenyl phosphate, yielding undecaprenyl-pyrophosphoryl-MurNAc-pentapeptide, known as lipid I. This Photobacterium profundum (strain SS9) protein is Phospho-N-acetylmuramoyl-pentapeptide-transferase.